Consider the following 899-residue polypeptide: Inner tegument protein (899 aa).

The segment at 463-899 (WNYTWLDATS…SAILDAELSK (437 aa)) is interaction with large tegument protein.

Belongs to the herpesviridae inner tegument protein family. Interacts (via C-terminus) with the large tegument protein/LTP (via N-terminus).

The protein resides in the virion tegument. It localises to the host cytoplasm. It is found in the host nucleus. Its subcellular location is the host Golgi apparatus. The protein localises to the host trans-Golgi network. Functionally, plays an essential role in cytoplasmic secondary envelopment during viral egress. Interacts with the capsid via the large tegument protein/LTP and participates in its transport to the host trans-Golgi network (TGN) where secondary envelopment occurs. Modulates tegumentation and capsid accumulation at the viral assembly complex. The protein is Inner tegument protein (63) of Saimiri sciureus (Common squirrel monkey).